Consider the following 473-residue polypeptide: MKLSMPRFDQAPVLVVGDVMLDRYWHGATSRISPEAPVPVVRVEQHEDRPGGAANVALNIAALGAQALLVGVTGRDEAADSLANSLKAAGVDARFQRIDSQPTIVKLRVMSRHQQLLRVDFEEPFRTDAAALAVDVESLLAKVKVLVLSDYGKGALQNHQVLIQAARARNIPVLADPKGKDFAIYRGASLITPNLSEFETIVGRCADEAELVAKGQALMSELDLGALLVTRGEHGMTLLRDGQPALHLPARAREVFDVTGAGDTVISTLAAALAAGEELPSAVGLANLAAGIVVGKLGTAAISAPELRRAVQREQGSERGVLGLEQLLLAIEDARAHGEKIVFTNGCFDILHAGHVTYLEQARAQGDRLIVGVNDDASVTRLKGVGRPINSVDRRMAVLAGLGAVDWVVSFAEDTPERLLEQVRPDVLVKGGDYGVEQVVGAQIVKAYGGEVRVLGLVENSSTTAIVEKIRQR.

The interval 1 to 317 is ribokinase; it reads MKLSMPRFDQ…RRAVQREQGS (317 aa). 194–197 contacts ATP; that stretch reads NLSE. Asp263 is a catalytic residue. Residues 343–473 form a cytidylyltransferase region; sequence FTNGCFDILH…TAIVEKIRQR (131 aa).

This sequence in the N-terminal section; belongs to the carbohydrate kinase PfkB family. In the C-terminal section; belongs to the cytidylyltransferase family. Homodimer.

The catalysed reaction is D-glycero-beta-D-manno-heptose 7-phosphate + ATP = D-glycero-beta-D-manno-heptose 1,7-bisphosphate + ADP + H(+). The enzyme catalyses D-glycero-beta-D-manno-heptose 1-phosphate + ATP + H(+) = ADP-D-glycero-beta-D-manno-heptose + diphosphate. It participates in nucleotide-sugar biosynthesis; ADP-L-glycero-beta-D-manno-heptose biosynthesis; ADP-L-glycero-beta-D-manno-heptose from D-glycero-beta-D-manno-heptose 7-phosphate: step 1/4. It functions in the pathway nucleotide-sugar biosynthesis; ADP-L-glycero-beta-D-manno-heptose biosynthesis; ADP-L-glycero-beta-D-manno-heptose from D-glycero-beta-D-manno-heptose 7-phosphate: step 3/4. Its function is as follows. Catalyzes the phosphorylation of D-glycero-D-manno-heptose 7-phosphate at the C-1 position to selectively form D-glycero-beta-D-manno-heptose-1,7-bisphosphate. Catalyzes the ADP transfer from ATP to D-glycero-beta-D-manno-heptose 1-phosphate, yielding ADP-D-glycero-beta-D-manno-heptose. This chain is Bifunctional protein HldE, found in Pseudomonas aeruginosa (strain LESB58).